Reading from the N-terminus, the 335-residue chain is Tetraacyldisaccharide 4'-kinase (335 aa).

Position 58–65 (58–65 (TVGGNGKT)) interacts with ATP.

Belongs to the LpxK family.

It carries out the reaction a lipid A disaccharide + ATP = a lipid IVA + ADP + H(+). It functions in the pathway glycolipid biosynthesis; lipid IV(A) biosynthesis; lipid IV(A) from (3R)-3-hydroxytetradecanoyl-[acyl-carrier-protein] and UDP-N-acetyl-alpha-D-glucosamine: step 6/6. Its function is as follows. Transfers the gamma-phosphate of ATP to the 4'-position of a tetraacyldisaccharide 1-phosphate intermediate (termed DS-1-P) to form tetraacyldisaccharide 1,4'-bis-phosphate (lipid IVA). The polypeptide is Tetraacyldisaccharide 4'-kinase (Dichelobacter nodosus (strain VCS1703A)).